The primary structure comprises 534 residues: Cytochrome P450 monooxygenase AN1598 (534 aa).

A glycan (N-linked (GlcNAc...) asparagine) is linked at asparagine 3. Residues 25 to 45 traverse the membrane as a helical segment; that stretch reads LYLEILGVLSVVYLLQTLVAY. Asparagine 95 carries an N-linked (GlcNAc...) asparagine glycan. Cysteine 464 provides a ligand contact to heme. A glycan (N-linked (GlcNAc...) asparagine) is linked at asparagine 498.

This sequence belongs to the cytochrome P450 family. Heme serves as cofactor.

It is found in the membrane. It functions in the pathway secondary metabolite biosynthesis; terpenoid biosynthesis. Bifunctional terpene synthase; part of the gene cluster that mediates the biosynthesis of the diterpene ent-pimara-8(14),15-diene (PD). Within the cluster, the HMG-CoA reductase AN1593 functions in the mevalonate pathway, which produces isoprenoid precursors. The geranylgeranyl pyrophosphate (GGPP) synthase AN1592 is needed in the formation of GGPP, the precursor for diterpenes. Lastly, the pimaradiene synthase pbcA performs the 2 cyclization steps that convert GGPP to ent-pimara-8(14),15-diene. The putative roles of the remaining cluster enzymes in ent-pimara-8(14),15-diene biosynthesis is unclear. The cytochrome P450 monooxygenase AN1598, the glutathione S-transferase AN1595, the oxidoreductases AN1596 and AN1597 probably function as decorative enzymes. It is possible that in biological conditions the compound is oxidized to ent-pimara-8(14),15-dien-19-oic acid, which is a bioactive diterpene compound predominant in many plant extracts. The polypeptide is Cytochrome P450 monooxygenase AN1598 (Emericella nidulans (strain FGSC A4 / ATCC 38163 / CBS 112.46 / NRRL 194 / M139) (Aspergillus nidulans)).